A 206-amino-acid chain; its full sequence is Small ribosomal subunit protein uS4 (206 aa).

The S4 RNA-binding domain occupies 96 to 156; the sequence is GRLDNVVYRM…EKAKKQSRVK (61 aa).

Belongs to the universal ribosomal protein uS4 family. In terms of assembly, part of the 30S ribosomal subunit. Contacts protein S5. The interaction surface between S4 and S5 is involved in control of translational fidelity.

In terms of biological role, one of the primary rRNA binding proteins, it binds directly to 16S rRNA where it nucleates assembly of the body of the 30S subunit. With S5 and S12 plays an important role in translational accuracy. The protein is Small ribosomal subunit protein uS4 of Salmonella agona (strain SL483).